The chain runs to 759 residues: uncharacterized protein (759 aa).

Disordered regions lie at residues M1–Q31 and N188–N211. Low complexity predominate over residues L17–Q31. Acidic residues predominate over residues D189–D207. Transmembrane regions (helical) follow at residues Y434 to M454, F456 to L476, M486 to A505, F517 to L537, M555 to L575, D597 to A617, S620 to A640, F643 to I663, G670 to A690, and L726 to V746.

It belongs to the ThrE exporter (TC 2.A.79) family.

It localises to the endoplasmic reticulum membrane. This is an uncharacterized protein from Schizosaccharomyces pombe (strain 972 / ATCC 24843) (Fission yeast).